The primary structure comprises 469 residues: UDP-N-acetylmuramate--L-alanine ligase (469 aa).

118–124 (GTHGKTT) contacts ATP.

This sequence belongs to the MurCDEF family.

Its subcellular location is the cytoplasm. The enzyme catalyses UDP-N-acetyl-alpha-D-muramate + L-alanine + ATP = UDP-N-acetyl-alpha-D-muramoyl-L-alanine + ADP + phosphate + H(+). Its pathway is cell wall biogenesis; peptidoglycan biosynthesis. Its function is as follows. Cell wall formation. This chain is UDP-N-acetylmuramate--L-alanine ligase, found in Ruegeria sp. (strain TM1040) (Silicibacter sp.).